Consider the following 317-residue polypeptide: Protein phosphatase 1 regulatory subunit 3C (317 aa).

A PP1-binding motif motif is present at residues 84 to 87 (RVVF). Residues 141 to 263 (PSSDYLSFRD…YRIVHVQWKP (123 aa)) form an interaction with EPM2A region. In terms of domain architecture, CBM21 spans 149–257 (RDRFQKNFVC…NNEAQNYRIV (109 aa)).

Interacts with PPP1CC catalytic subunit of PP1 and associates with glycogen. Forms complexes with glycogen phosphorylase, glycogen synthase and phosphorylase kinase which is necessary for its regulation of PP1 activity. Also interacts with EPM2A/laforin. Ubiquitinated by NHLRC1/malin in a EPM2A/laforin-dependent manner.

Its function is as follows. Acts as a glycogen-targeting subunit for PP1 and regulates its activity. Activates glycogen synthase, reduces glycogen phosphorylase activity and limits glycogen breakdown. Dramatically increases basal and insulin-stimulated glycogen synthesis upon overexpression in a variety of cell types. The polypeptide is Protein phosphatase 1 regulatory subunit 3C (Rattus norvegicus (Rat)).